A 1386-amino-acid polypeptide reads, in one-letter code: DNA-directed RNA polymerase subunit beta'' (1386 aa).

Zn(2+) contacts are provided by cysteine 220, cysteine 289, cysteine 296, and cysteine 299.

It belongs to the RNA polymerase beta' chain family. RpoC2 subfamily. As to quaternary structure, in plastids the minimal PEP RNA polymerase catalytic core is composed of four subunits: alpha, beta, beta', and beta''. When a (nuclear-encoded) sigma factor is associated with the core the holoenzyme is formed, which can initiate transcription. Zn(2+) serves as cofactor.

The protein resides in the plastid. The protein localises to the chloroplast. It carries out the reaction RNA(n) + a ribonucleoside 5'-triphosphate = RNA(n+1) + diphosphate. DNA-dependent RNA polymerase catalyzes the transcription of DNA into RNA using the four ribonucleoside triphosphates as substrates. This is DNA-directed RNA polymerase subunit beta'' from Marchantia polymorpha (Common liverwort).